The primary structure comprises 579 residues: Nuclear receptor coactivator 5 (579 aa).

Met1 carries the post-translational modification N-acetylmethionine. The disordered stretch occupies residues 1–77 (MNTAPSRPSP…DIRDHRDSRS (77 aa)). The transcription repression stretch occupies residues 1 to 158 (MNTAPSRPSP…RDSFDGRGPP (158 aa)). Residue Thr3 is modified to Phosphothreonine. Phosphoserine occurs at positions 9, 21, 29, 34, 96, 116, 126, 143, and 151. The segment covering 11 to 77 (TRRDPYSFGD…DIRDHRDSRS (67 aa)) has biased composition (basic and acidic residues). A disordered region spans residues 148–172 (YRDSFDGRGPPGPESQSRAKERLKR). Thr274 is subject to Phosphothreonine. The LXXLL motif motif lies at 345-349 (LINLL). Phosphoserine is present on residues Ser378 and Ser381. 2 disordered regions span residues 378-428 (SADS…PTSQ) and 446-529 (ANSS…RPVS). 2 stretches are compositionally biased toward low complexity: residues 395–420 (SGSS…ATPT) and 446–460 (ANSS…TGSS). The transcription activation stretch occupies residues 458 to 579 (GSSQNQNFST…APMGSYQRHY (122 aa)). Polar residues predominate over residues 461–485 (QNQNFSTAANSQPQQRPQASGNQPP).

As to quaternary structure, binds HTATIP2/TIP30. Interacts with YLPM1. Forms a complex with ILF2, ILF3, YLPM1, KHDRBS1, RBMX and PPP1CA.

The protein resides in the nucleus. In terms of biological role, nuclear receptor coregulator that can have both coactivator and corepressor functions. Interacts with nuclear receptors for steroids (ESR1 and ESR2) independently of the steroid binding domain (AF-2) of the ESR receptors, and with the orphan nuclear receptor NR1D2. Involved in the coactivation of nuclear steroid receptors (ER) as well as the corepression of MYC in response to 17-beta-estradiol (E2). In Mus musculus (Mouse), this protein is Nuclear receptor coactivator 5 (Ncoa5).